A 148-amino-acid chain; its full sequence is UPF0178 protein DP1304 (148 aa).

Belongs to the UPF0178 family.

In Desulfotalea psychrophila (strain LSv54 / DSM 12343), this protein is UPF0178 protein DP1304.